Consider the following 345-residue polypeptide: Phenylalanine--tRNA ligase alpha subunit (345 aa).

Position 253 (Glu-253) interacts with Mg(2+).

It belongs to the class-II aminoacyl-tRNA synthetase family. Phe-tRNA synthetase alpha subunit type 1 subfamily. As to quaternary structure, tetramer of two alpha and two beta subunits. Mg(2+) serves as cofactor.

It localises to the cytoplasm. The catalysed reaction is tRNA(Phe) + L-phenylalanine + ATP = L-phenylalanyl-tRNA(Phe) + AMP + diphosphate + H(+). This Nitratidesulfovibrio vulgaris (strain DP4) (Desulfovibrio vulgaris) protein is Phenylalanine--tRNA ligase alpha subunit.